The sequence spans 1180 residues: uncharacterized protein (1180 aa).

Disordered stretches follow at residues 229 to 280 (RQQG…DTSI), 431 to 465 (KQPP…PPLK), 484 to 575 (SRDT…PNMR), 730 to 758 (GRPL…ASRT), 810 to 986 (GKAE…ASWD), 1045 to 1109 (RLQE…ELEM), and 1125 to 1152 (ERLE…QKEE). Acidic residues predominate over residues 269–279 (QEDETQAEDTS). Basic residues predominate over residues 431 to 443 (KQPPKEKAHRRGA). Positions 486 to 497 (DTLSPQGSSSLP) are enriched in polar residues. Positions 509 to 518 (SKARHTRVHS) are enriched in basic residues. Basic and acidic residues-rich tracts occupy residues 730–745 (GRPL…DPEP), 826–837 (SHERDLINEAKR), and 846–856 (TKGPKSEREGK). Residues 872–889 (KAKKKLEKKTRPQRKRTQ) are compositionally biased toward basic residues. Polar residues predominate over residues 937-959 (QESQVSLDGRSSPSQIATVTGNM). Basic and acidic residues-rich tracts occupy residues 960 to 986 (ESKE…ASWD), 1045 to 1106 (RLQE…RQEE), and 1127 to 1152 (LEYQ…QKEE). A coiled-coil region spans residues 988–1171 (LRAERAEMRW…ATKQAQEQAR (184 aa)).

This is an uncharacterized protein from Homo sapiens (Human).